A 177-amino-acid chain; its full sequence is Protein GrpE (177 aa).

The tract at residues 1–26 (MSEEIKKDDLQEEVEATETEETVEEV) is disordered. Residues 10 to 26 (LQEEVEATETEETVEEV) are compositionally biased toward acidic residues.

The protein belongs to the GrpE family. As to quaternary structure, homodimer.

The protein resides in the cytoplasm. In terms of biological role, participates actively in the response to hyperosmotic and heat shock by preventing the aggregation of stress-denatured proteins, in association with DnaK and GrpE. It is the nucleotide exchange factor for DnaK and may function as a thermosensor. Unfolded proteins bind initially to DnaJ; upon interaction with the DnaJ-bound protein, DnaK hydrolyzes its bound ATP, resulting in the formation of a stable complex. GrpE releases ADP from DnaK; ATP binding to DnaK triggers the release of the substrate protein, thus completing the reaction cycle. Several rounds of ATP-dependent interactions between DnaJ, DnaK and GrpE are required for fully efficient folding. The polypeptide is Protein GrpE (Streptococcus agalactiae serotype Ia (strain ATCC 27591 / A909 / CDC SS700)).